The following is a 38-amino-acid chain: Large ribosomal subunit protein bL36 (38 aa).

It belongs to the bacterial ribosomal protein bL36 family.

The sequence is that of Large ribosomal subunit protein bL36 from Baumannia cicadellinicola subsp. Homalodisca coagulata.